The chain runs to 525 residues: MRTAKFATLAALVASAAAQQACSLTTERHPSLSWNKCTAGGQCQTVQASITLDSNWRWTHQVSGSTNCYTGNKWDTSICTDAKSCAQNCCVDGADYTSTYGITTNGDSLSLKFVTKGQHSTNVGSRTYLMDGEDKYQTFELLGNEFTFDVDVSNIGCGLNGALYFVSMDADGGLSRYPGNKAGAKYGTGYCDAQCPRDIKFINGEANIEGWTGSTNDPNAGAGRYGTCCSEMDIWEANNMATAFTPHPCTIIGQSRCEGDSCGGTYSNERYAGVCDPDGCDFNSYRQGNKTFYGKGMTVDTTKKITVVTQFLKDANGDLGEIKRFYVQDGKIIPNSESTIPGVEGNSITQDWCDRQKVAFGDIDDFNRKGGMKQMGKALAGPMVLVMSIWDDHASNMLWLDSTFPVDAAGKPGAERGACPTTSGVPAEVEAEAPNSNVVFSNIRFGPIGSTVAGLPGAGNGGNNGGNPPPPTTTTSSAPATTTTASAGPKAGRWQQCGGIGFTGPTQCEEPYICTKLNDWYSQCL.

A signal peptide spans 1-18; sequence MRTAKFATLAALVASAAA. Positions 19 to 467 are catalytic; sequence QQACSLTTER…AGNGGNNGGN (449 aa). Catalysis depends on Glu-231, which acts as the Nucleophile. Catalysis depends on Glu-236, which acts as the Proton donor. An N-linked (GlcNAc...) asparagine glycan is attached at Asn-289. Residues 454–492 are disordered; that stretch reads GLPGAGNGGNNGGNPPPPTTTTSSAPATTTTASAGPKAG. Over residues 456-465 the composition is skewed to gly residues; the sequence is PGAGNGGNNG. Positions 468-489 are linker; sequence PPPPTTTTSSAPATTTTASAGP. The segment covering 473–489 has biased composition (low complexity); it reads TTTSSAPATTTTASAGP. A CBM1 domain is found at 489–525; sequence PKAGRWQQCGGIGFTGPTQCEEPYICTKLNDWYSQCL. 2 disulfide bridges follow: Cys-497–Cys-514 and Cys-508–Cys-524.

It belongs to the glycosyl hydrolase 7 (cellulase C) family.

The catalysed reaction is Hydrolysis of (1-&gt;4)-beta-D-glucosidic linkages in cellulose and cellotetraose, releasing cellobiose from the non-reducing ends of the chains.. Functionally, the biological conversion of cellulose to glucose generally requires three types of hydrolytic enzymes: (1) Endoglucanases which cut internal beta-1,4-glucosidic bonds; (2) Exocellobiohydrolases that cut the disaccharide cellobiose from the non-reducing end of the cellulose polymer chain; (3) Beta-1,4-glucosidases which hydrolyze the cellobiose and other short cello-oligosaccharides to glucose. This Humicola insolens (Soft-rot fungus) protein is Exoglucanase 1 (CBH-1).